A 756-amino-acid polypeptide reads, in one-letter code: Serine/threonine-protein kinase DCLK2 (756 aa).

The disordered stretch occupies residues 1–44; sequence MASTRSIELEHFEERDKRPRPGSRRGAPSSSGGSSISGPKGNGL. The segment covering 7–19 has biased composition (basic and acidic residues); that stretch reads IELEHFEERDKRP. Low complexity predominate over residues 24 to 43; the sequence is RRGAPSSSGGSSISGPKGNG. Thr61 carries the phosphothreonine modification. 2 Doublecortin domains span residues 72 to 158 and 196 to 279; these read KKAR…VDYT and KLVT…AQDD. Low complexity-rich tracts occupy residues 301 to 311 and 323 to 346; these read KYSGSRSPGFS and TPSS…SPGS. The tract at residues 301-375 is disordered; it reads KYSGSRSPGF…GPELDRCLSP (75 aa). The span at 353 to 364 shows a compositional bias: polar residues; that stretch reads ISAQGRSSSNVN. Ser361 carries the post-translational modification Phosphoserine. Residues 393–650 enclose the Protein kinase domain; sequence YRIGKVIGDG…AGEILSHPWV (258 aa). Residues 399–407 and Lys422 contribute to the ATP site; that span reads IGDGNFAVV. Asp514 serves as the catalytic Proton acceptor. Position 646 is a phosphoserine (Ser646). The residue at position 665 (Thr665) is a Phosphothreonine. The interval 707–756 is disordered; it reads QDSSRPSREQTSPVPPSAQEAPPPLESPRPPGPPATSGCDLAGTWRRHRD. Over residues 719–740 the composition is skewed to pro residues; the sequence is PVPPSAQEAPPPLESPRPPGPP.

Belongs to the protein kinase superfamily. CAMK Ser/Thr protein kinase family. CaMK subfamily. In terms of assembly, binds to and stabilizes microtubules. Interacts with MAPK8IP1/JIP-1, MAPK8IP2/JIP-2, MAPK9/JNK2, PPP1R9B/NEURABIN-2 and actin. In terms of processing, autophosphorylated. In terms of tissue distribution, expressed in the central and peripheral nervous system including the brain, spinal cord, cranial and dorsal root ganglia and in the parasympathetic ganglia. Present in neurons, but not in glial cells, in most forebrain areas. Strong expression in the hippocampal CA1 pyramidal cell layer. Expressed in the photoreceptor sensory cilium complex and in eyes. Also detected in individual cells of the olfactory epithelium.

It localises to the cytoplasm. The protein resides in the cytoskeleton. It catalyses the reaction L-seryl-[protein] + ATP = O-phospho-L-seryl-[protein] + ADP + H(+). The catalysed reaction is L-threonyl-[protein] + ATP = O-phospho-L-threonyl-[protein] + ADP + H(+). Protein kinase with a significantly reduced Ca(2+)+/CAM affinity and dependence compared to other members of the CaMK family. May play a role in the down-regulation of CRE-dependent gene activation probably by phosphorylation of the CREB coactivator CRTC2/TORC2 and the resulting retention of TORC2 in the cytoplasm. The polypeptide is Serine/threonine-protein kinase DCLK2 (Dclk2) (Mus musculus (Mouse)).